Consider the following 110-residue polypeptide: Small heat shock protein hspG11 (110 aa).

The sHSP domain maps to 30 to 110; the sequence is KTIIDILPPM…KSTSTSSTFR (81 aa). A disordered region spans residues 78-110; that stretch reads KDLNKQHNNNNNNNNNNNNLVIEKSTSTSSTFR. Residues 85–96 show a composition bias toward low complexity; it reads NNNNNNNNNNNN. Residues 101-110 show a composition bias toward polar residues; the sequence is KSTSTSSTFR.

This sequence belongs to the small heat shock protein (HSP20) family.

The polypeptide is Small heat shock protein hspG11 (hspG11) (Dictyostelium discoideum (Social amoeba)).